Consider the following 270-residue polypeptide: uncharacterized protein (270 aa).

It is found in the virion. This is an uncharacterized protein from Acanthamoeba polyphaga (Amoeba).